Here is a 477-residue protein sequence, read N- to C-terminus: Glutamate--tRNA ligase 2 (477 aa).

Residues 12 to 22 (PSPTGRMHLGN) carry the 'HIGH' region motif. 4 residues coordinate Zn(2+): Cys109, Cys111, Cys136, and His138. The 'KMSKS' region motif lies at 253-257 (PLSKR). An ATP-binding site is contributed by Lys256.

The protein belongs to the class-I aminoacyl-tRNA synthetase family. Glutamate--tRNA ligase type 1 subfamily. Monomer. It depends on Zn(2+) as a cofactor.

It is found in the cytoplasm. It carries out the reaction tRNA(Glu) + L-glutamate + ATP = L-glutamyl-tRNA(Glu) + AMP + diphosphate. Catalyzes the attachment of glutamate to tRNA(Glu) in a two-step reaction: glutamate is first activated by ATP to form Glu-AMP and then transferred to the acceptor end of tRNA(Glu). The protein is Glutamate--tRNA ligase 2 of Alkalilimnicola ehrlichii (strain ATCC BAA-1101 / DSM 17681 / MLHE-1).